A 153-amino-acid chain; its full sequence is uncharacterized protein (153 aa).

The tract at residues 19-46 (EKSTRLEEDAMESEPLAGTKTRGRGRRR) is disordered.

This is an uncharacterized protein from Homo sapiens (Human).